The chain runs to 175 residues: Mitochondrial inner membrane protease subunit 2 (175 aa).

The helical transmembrane segment at 19 to 37 (FFVAVPVAVTFLDRVACVA) threads the bilayer. Catalysis depends on residues S43 and K91.

Belongs to the peptidase S26 family. IMP2 subfamily. Heterodimer of 2 subunits, IMMPL1 and IMMPL2.

Its subcellular location is the mitochondrion inner membrane. In terms of biological role, catalyzes the removal of transit peptides required for the targeting of proteins from the mitochondrial matrix, across the inner membrane, into the inter-membrane space. Known to process the nuclear encoded protein DIABLO. This chain is Mitochondrial inner membrane protease subunit 2 (Immp2l), found in Mus musculus (Mouse).